We begin with the raw amino-acid sequence, 288 residues long: Pyridoxal kinase PdxY (288 aa).

Substrate-binding positions include Ser-9 and 44-45; that span reads TQ. Asp-111, Glu-148, and Lys-181 together coordinate ATP. Asp-224 is a binding site for substrate.

This sequence belongs to the pyridoxine kinase family. PdxY subfamily. In terms of assembly, homodimer. The cofactor is Mg(2+).

It catalyses the reaction pyridoxal + ATP = pyridoxal 5'-phosphate + ADP + H(+). It functions in the pathway cofactor metabolism; pyridoxal 5'-phosphate salvage; pyridoxal 5'-phosphate from pyridoxal: step 1/1. In terms of biological role, pyridoxal kinase involved in the salvage pathway of pyridoxal 5'-phosphate (PLP). Catalyzes the phosphorylation of pyridoxal to PLP. This chain is Pyridoxal kinase PdxY, found in Haemophilus influenzae (strain ATCC 51907 / DSM 11121 / KW20 / Rd).